We begin with the raw amino-acid sequence, 110 residues long: Large ribosomal subunit protein uL22 (110 aa).

This sequence belongs to the universal ribosomal protein uL22 family. Part of the 50S ribosomal subunit.

This protein binds specifically to 23S rRNA; its binding is stimulated by other ribosomal proteins, e.g. L4, L17, and L20. It is important during the early stages of 50S assembly. It makes multiple contacts with different domains of the 23S rRNA in the assembled 50S subunit and ribosome. In terms of biological role, the globular domain of the protein is located near the polypeptide exit tunnel on the outside of the subunit, while an extended beta-hairpin is found that lines the wall of the exit tunnel in the center of the 70S ribosome. The polypeptide is Large ribosomal subunit protein uL22 (Chromohalobacter salexigens (strain ATCC BAA-138 / DSM 3043 / CIP 106854 / NCIMB 13768 / 1H11)).